The chain runs to 513 residues: Prostaglandin E2 receptor EP4 subtype (513 aa).

At 1 to 44 (MAEVGGTIPRSNRELQRCVLLTTTIMSIPGVNASFSSTPERLNS) the chain is on the extracellular side. Residue asparagine 32 is glycosylated (N-linked (GlcNAc...) asparagine). The chain crosses the membrane as a helical span at residues 45–68 (PVTIPAVMFIFGVVGNLVAIVVLC). The Cytoplasmic portion of the chain corresponds to 69–80 (KSRKEQKETTFY). A helical transmembrane segment spans residues 81 to 104 (TLVCGLAVTDLLGTLLVSPVTIAT). The Extracellular segment spans residues 105 to 121 (YMKGQWPGDQALCDYST). A disulfide bridge links cysteine 117 with cysteine 195. The helical transmembrane segment at 122 to 140 (FILLFFGLSGLSIICAMSI) threads the bilayer. Over 141 to 160 (ERYLAINHAYFYSHYVDKRL) the chain is Cytoplasmic. The helical transmembrane segment at 161 to 185 (AGLTLFAIYASNVLFCALPNMGLGR) threads the bilayer. The Extracellular portion of the chain corresponds to 186–209 (SERQYPGTWCFIDWTTNVTAYAAF). A helical membrane pass occupies residues 210–236 (SYMYAGFSSFLILATVLCNVLVCGALL). The Cytoplasmic portion of the chain corresponds to 237 to 295 (RMHRQFMRRTSLGTEQHHAAAAAAVASVACRGHAGASPALQRLSDFRRRRSFRRIAGAE). A helical membrane pass occupies residues 296-323 (IQMVILLIATSLVVLICSIPLVVRVFIN). Residues 324–340 (QLYQPNVVKDISRNPDL) are Extracellular-facing. Residues 341–360 (QAIRIASVNPILDPWIYILL) form a helical membrane-spanning segment. The Cytoplasmic segment spans residues 361 to 513 (RKTVLSKAIE…ETLKLSEKCI (153 aa)). Residues 383-403 (GRDSSAQHCSESRRTSSAMSG) are disordered. Polar residues predominate over residues 384-403 (RDSSAQHCSESRRTSSAMSG). A phosphoserine mark is found at serine 402, serine 405, and serine 407.

It belongs to the G-protein coupled receptor 1 family. Interacts with FEM1A. Phosphorylation mediates agonist-mediated desensitization by promoting cytoplasmic retention. Abundant expression in ileum, thymus and mastocytoma P-815 cells. Also observed in lung, spleen, heart and uterus.

The protein resides in the cell membrane. In terms of biological role, receptor for prostaglandin E2 (PGE2). The activity of this receptor is mediated by G(s) proteins that stimulate adenylate cyclase. Has a relaxing effect on smooth muscle. May play an important role in regulating renal hemodynamics, intestinal epithelial transport, adrenal aldosterone secretion, and uterine function. In Mus musculus (Mouse), this protein is Prostaglandin E2 receptor EP4 subtype (Ptger4).